The sequence spans 336 residues: Aldehyde reductase AdhA (336 aa).

Zn(2+)-binding residues include Cys36, Cys39, His61, Cys92, Cys95, Cys98, Cys106, and Cys148.

It belongs to the zinc-containing alcohol dehydrogenase family. Homotetramer. Requires Zn(2+) as cofactor.

Its subcellular location is the cytoplasm. The catalysed reaction is a primary alcohol + NADP(+) = an aldehyde + NADPH + H(+). Active on a wide variety of primary alcohols and their corresponding aldehydes, but not against ketones nor secondary alcohols. Active on aliphatic compounds up to 5 carbons in length and aromatic alcohols, less effective on branched-chain primary alcohols. Prefers NADPH to NADH. Its catalytic efficiency is greatest for aldehydes, suggesting the reduction of aromatic and medium-chain aliphatic aldehydes is its in vivo activity. Plays a role in tolerance to internally produced ethanol. The chain is Aldehyde reductase AdhA from Synechocystis sp. (strain ATCC 27184 / PCC 6803 / Kazusa).